A 177-amino-acid polypeptide reads, in one-letter code: Putative HVA22-like protein g (177 aa).

Positions 145–165 are disordered; it reads QSTPKSKAEEKKETTIPKLDD. The segment covering 150 to 165 has biased composition (basic and acidic residues); the sequence is SKAEEKKETTIPKLDD.

The protein belongs to the DP1 family.

The protein is Putative HVA22-like protein g (HVA22G) of Arabidopsis thaliana (Mouse-ear cress).